Consider the following 397-residue polypeptide: tRNA pseudouridine synthase D (397 aa).

The Nucleophile role is filled by Asp-76. The TRUD domain occupies 151 to 361 (GVPNFFGEQR…MEGERRPLRV (211 aa)).

Belongs to the pseudouridine synthase TruD family.

The enzyme catalyses uridine(13) in tRNA = pseudouridine(13) in tRNA. In terms of biological role, responsible for synthesis of pseudouridine from uracil-13 in transfer RNAs. This is tRNA pseudouridine synthase D from Geotalea daltonii (strain DSM 22248 / JCM 15807 / FRC-32) (Geobacter daltonii).